We begin with the raw amino-acid sequence, 582 residues long: DBIRD complex subunit ZNF326 (582 aa).

The interval 1-124 (MDFEDDYTHS…YRNSLDSFGG (124 aa)) is mediates transcriptional activation. Phosphoserine is present on residues Ser-48, Ser-56, Ser-63, Ser-69, Ser-81, Ser-82, Ser-91, Ser-106, Ser-114, Ser-118, Ser-121, and Ser-137. Lys-140 participates in a covalent cross-link: Glycyl lysine isopeptide (Lys-Gly) (interchain with G-Cter in SUMO2). Positions 154–194 (YSSYSSFSSPHMKPAPVGSRGRGTPAYPESTFGSRNYDAFG) are disordered. The residue at position 173 (Arg-173) is an Omega-N-methylarginine. Position 212 is a phosphoserine (Ser-212). Arg-235 bears the Omega-N-methylarginine mark. The short motif at 238 to 260 (KRKMMQPFNKPSGTFIKKPKLAK) is the Bipartite nuclear localization signal element. A Glycyl lysine isopeptide (Lys-Gly) (interchain with G-Cter in SUMO2) cross-link involves residue Lys-240. Positions 243-302 (QPFNKPSGTFIKKPKLAKPMEKISLSKSPTKTDPKNEEEEKRRIEARREKQRRRREKNSE) are disordered. At Lys-247 the chain carries N6-acetyllysine; alternate. Lys-247 is covalently cross-linked (Glycyl lysine isopeptide (Lys-Gly) (interchain with G-Cter in SUMO2); alternate). A Phosphoserine modification is found at Ser-249. Thr-251 is subject to Phosphothreonine. Glycyl lysine isopeptide (Lys-Gly) (interchain with G-Cter in SUMO2) cross-links involve residues Lys-254 and Lys-264. At Ser-270 the chain carries Phosphoserine. Residues 272–290 (TKTDPKNEEEEKRRIEARR) are compositionally biased toward basic and acidic residues. The segment at 314-336 (CSFCKFRTFEEKDIELHLESSSH) adopts a C2H2 AKAP95-type 1 zinc-finger fold. Lys-401 participates in a covalent cross-link: Glycyl lysine isopeptide (Lys-Gly) (interchain with G-Cter in SUMO2). Residues 407 to 430 (CSACSVYIPALHSSVQQHLKSPDH) form a C2H2 AKAP95-type 2 zinc finger. Residues Lys-459 and Lys-467 each participate in a glycyl lysine isopeptide (Lys-Gly) (interchain with G-Cter in SUMO2) cross-link. A disordered region spans residues 472 to 582 (FEIQDHSQDQ…DFPVEQPEEN (111 aa)). Residues 483-523 (IEGDEEDEEKIDEPIEEEEDEDEEEEAEEVGEVEEVEEVEE) show a composition bias toward acidic residues. The segment covering 530 to 545 (EGEGNIQGVGEGGEVG) has biased composition (gly residues). The span at 552-567 (GVGEVEEVEELEEETA) shows a compositional bias: acidic residues.

The protein belongs to the AKAP95 family. In terms of assembly, component of the DBIRD complex. Interacts with CCAR2; the interaction is direct.

The protein resides in the nucleus matrix. In terms of biological role, core component of the DBIRD complex, a multiprotein complex that acts at the interface between core mRNP particles and RNA polymerase II (RNAPII) and integrates transcript elongation with the regulation of alternative splicing: the DBIRD complex affects local transcript elongation rates and alternative splicing of a large set of exons embedded in (A + T)-rich DNA regions. May play a role in neuronal differentiation and is able to bind DNA and activate expression in vitro. The sequence is that of DBIRD complex subunit ZNF326 (ZNF326) from Homo sapiens (Human).